The chain runs to 95 residues: Aspartyl/glutamyl-tRNA(Asn/Gln) amidotransferase subunit C (95 aa).

Belongs to the GatC family. Heterotrimer of A, B and C subunits.

It catalyses the reaction L-glutamyl-tRNA(Gln) + L-glutamine + ATP + H2O = L-glutaminyl-tRNA(Gln) + L-glutamate + ADP + phosphate + H(+). The enzyme catalyses L-aspartyl-tRNA(Asn) + L-glutamine + ATP + H2O = L-asparaginyl-tRNA(Asn) + L-glutamate + ADP + phosphate + 2 H(+). Its function is as follows. Allows the formation of correctly charged Asn-tRNA(Asn) or Gln-tRNA(Gln) through the transamidation of misacylated Asp-tRNA(Asn) or Glu-tRNA(Gln) in organisms which lack either or both of asparaginyl-tRNA or glutaminyl-tRNA synthetases. The reaction takes place in the presence of glutamine and ATP through an activated phospho-Asp-tRNA(Asn) or phospho-Glu-tRNA(Gln). The sequence is that of Aspartyl/glutamyl-tRNA(Asn/Gln) amidotransferase subunit C from Rhodospirillum rubrum (strain ATCC 11170 / ATH 1.1.1 / DSM 467 / LMG 4362 / NCIMB 8255 / S1).